Reading from the N-terminus, the 1291-residue chain is DNA-directed RNA polymerase subunit beta' (1291 aa).

Positions 60, 62, 75, and 78 each coordinate Zn(2+). Mg(2+)-binding residues include aspartate 535, aspartate 537, and aspartate 539. The Zn(2+) site is built by cysteine 874, cysteine 951, cysteine 958, and cysteine 961.

This sequence belongs to the RNA polymerase beta' chain family. As to quaternary structure, the RNAP catalytic core consists of 2 alpha, 1 beta, 1 beta' and 1 omega subunit. When a sigma factor is associated with the core the holoenzyme is formed, which can initiate transcription. The cofactor is Mg(2+). Zn(2+) serves as cofactor.

The catalysed reaction is RNA(n) + a ribonucleoside 5'-triphosphate = RNA(n+1) + diphosphate. Functionally, DNA-dependent RNA polymerase catalyzes the transcription of DNA into RNA using the four ribonucleoside triphosphates as substrates. The protein is DNA-directed RNA polymerase subunit beta' of Leifsonia xyli subsp. xyli (strain CTCB07).